We begin with the raw amino-acid sequence, 331 residues long: DNA fragmentation factor subunit alpha (331 aa).

Met-1 is modified (N-acetylmethionine). The 80-residue stretch at Pro-17–Tyr-96 folds into the CIDE-N domain. Thr-243 carries the phosphothreonine modification. The interval Leu-306–Ser-331 is disordered.

As to quaternary structure, heterodimer of DFFA and DFFB. Caspase-3 cleaves DFF45 at 2 sites to generate an active factor.

The protein resides in the cytoplasm. Its function is as follows. Inhibitor of the caspase-activated DNase (DFF40). In Mus musculus (Mouse), this protein is DNA fragmentation factor subunit alpha (Dffa).